A 276-amino-acid polypeptide reads, in one-letter code: Diaminopimelate epimerase (276 aa).

Substrate is bound by residues N11, Q44, and N64. C73 (proton donor) is an active-site residue. Substrate is bound by residues 74-75 (IN), N159, N192, and 210-211 (ER). Residue C219 is the Proton acceptor of the active site. Position 220 to 221 (220 to 221 (GS)) interacts with substrate.

Belongs to the diaminopimelate epimerase family. In terms of assembly, homodimer.

Its subcellular location is the cytoplasm. It catalyses the reaction (2S,6S)-2,6-diaminopimelate = meso-2,6-diaminopimelate. It participates in amino-acid biosynthesis; L-lysine biosynthesis via DAP pathway; DL-2,6-diaminopimelate from LL-2,6-diaminopimelate: step 1/1. Catalyzes the stereoinversion of LL-2,6-diaminopimelate (L,L-DAP) to meso-diaminopimelate (meso-DAP), a precursor of L-lysine and an essential component of the bacterial peptidoglycan. This is Diaminopimelate epimerase from Wigglesworthia glossinidia brevipalpis.